The primary structure comprises 333 residues: METLSRLLVFMSLFSGLVSGFALQNLPITSFEESYTQLFGDKNLFVHQDGKSVRLTLDERTGSGFVSNDYYLHGFFSASIKLPSDYTAGVVVAFYMSNGDMYEKNHDEIDFEFLGNIREKEWRVQTNIYGNGSTHSGREERYNLWFDPTEDFHQYSILWSDSHIIFFVDNVPIREVKRTAEMGGHFPSKPMSLYTTIWDGSKWATNGGKYGVNYKYAPYIARFSDLVLHGCPVDPIEQFPRCDEGAAEDMRAAQEITPSQRSKMDVFRRRLMTYSYCYDRARYNVALSECVVNPAEAQRLRVYDPVRFGGIPRRHRNGKHRSKRSRVDGTESI.

The first 20 residues, 1 to 20 (METLSRLLVFMSLFSGLVSG), serve as a signal peptide directing secretion. The 203-residue stretch at 21–223 (FALQNLPITS…YKYAPYIARF (203 aa)) folds into the GH16 domain. The active-site Nucleophile is the glutamate 108. Residue glutamate 112 is the Proton donor of the active site. Xyloglucan-binding positions include glutamate 112 and 125–127 (QTN). The N-linked (GlcNAc...) asparagine glycan is linked to asparagine 131. Xyloglucan contacts are provided by residues 135–139 (HSGRE), 202–203 (KW), glycine 207, and arginine 282. Cysteines 277 and 290 form a disulfide. The tract at residues 311–333 (IPRRHRNGKHRSKRSRVDGTESI) is disordered. The span at 312–324 (PRRHRNGKHRSKR) shows a compositional bias: basic residues.

Belongs to the glycosyl hydrolase 16 family. XTH group 3 subfamily. Post-translationally, contains at least one intrachain disulfide bond essential for its enzymatic activity. Expressed in 7 day old seedlings, roots, hypocotyls, rosette leaves, internodes between nodes bearing axillary shoots, nodes bearing flowers, flower buds, anthers and siliques.

It localises to the secreted. The protein localises to the cell wall. Its subcellular location is the extracellular space. It is found in the apoplast. It catalyses the reaction breaks a beta-(1-&gt;4) bond in the backbone of a xyloglucan and transfers the xyloglucanyl segment on to O-4 of the non-reducing terminal glucose residue of an acceptor, which can be a xyloglucan or an oligosaccharide of xyloglucan.. Catalyzes xyloglucan endohydrolysis (XEH) and/or endotransglycosylation (XET). Cleaves and religates xyloglucan polymers, an essential constituent of the primary cell wall, and thereby participates in cell wall construction of growing tissues. Required for cell wall modification during the development of tracheary elements. The protein is Probable xyloglucan endotransglucosylase/hydrolase protein 27 (XTH27) of Arabidopsis thaliana (Mouse-ear cress).